Reading from the N-terminus, the 341-residue chain is MEKSISSLQQQINAAPLNSEADIESFRLLYTVRKGLIAALFSQLKSVDPTDRPRIGNLLNQLKESAEARIAEAAESISHHEESSQPVIDLTLPGRVSFTGSEHPVQKVLGEMKRIFSAMGFAMATGPELELDSYNFDMLNFPPDHPARDMQDTFFIKRNGNEDDVLLRTHTSPVQVRVMLEEPPPIRVICPGKVYRNEAISSRSYCVFHQLEGLYIDKGVTFADLKATIYSFAHQMFGSDVKLRFRPSFFPFTEPSAEVDVTCYLCGGKGCKVCKKSGWLEIMGCGMVHPNVIQNCGIDPEVWSGYAFGMGVDRTVLLHYKIDDIRLLFENDIRMLRQFTA.

E254 serves as a coordination point for Mg(2+).

It belongs to the class-II aminoacyl-tRNA synthetase family. Phe-tRNA synthetase alpha subunit type 1 subfamily. Tetramer of two alpha and two beta subunits. Requires Mg(2+) as cofactor.

The protein localises to the cytoplasm. It catalyses the reaction tRNA(Phe) + L-phenylalanine + ATP = L-phenylalanyl-tRNA(Phe) + AMP + diphosphate + H(+). In Chlorobium phaeovibrioides (strain DSM 265 / 1930) (Prosthecochloris vibrioformis (strain DSM 265)), this protein is Phenylalanine--tRNA ligase alpha subunit.